A 656-amino-acid chain; its full sequence is Macrolide export ATP-binding/permease protein MacB (656 aa).

The ABC transporter domain maps to 6–244 (LEVSACYRSF…VKAQVDMSLA (239 aa)). 42–49 (GASGSGKS) contributes to the ATP binding site. 4 helical membrane-spanning segments follow: residues 277 to 297 (FLTMLGIIIGIASVVSVVALG), 531 to 551 (LLISAIAVISLVVGGIGVMNI), 586 to 606 (LVCLCGGALGVALAYLIGVVF), and 621 to 641 (SIVAAFACSTLIGVLFGFLPA).

The protein belongs to the ABC transporter superfamily. Macrolide exporter (TC 3.A.1.122) family. As to quaternary structure, homodimer. Part of the tripartite efflux system MacAB-TolC, which is composed of an inner membrane transporter, MacB, a periplasmic membrane fusion protein, MacA, and an outer membrane component, TolC. The complex forms a large protein conduit and can translocate molecules across both the inner and outer membranes. Interacts with MacA.

It localises to the cell inner membrane. Its function is as follows. Part of the tripartite efflux system MacAB-TolC. MacB is a non-canonical ABC transporter that contains transmembrane domains (TMD), which form a pore in the inner membrane, and an ATP-binding domain (NBD), which is responsible for energy generation. Confers resistance against macrolides. This is Macrolide export ATP-binding/permease protein MacB from Shewanella oneidensis (strain ATCC 700550 / JCM 31522 / CIP 106686 / LMG 19005 / NCIMB 14063 / MR-1).